The sequence spans 179 residues: MIP18 family protein C144.16 (179 aa).

A disordered region spans residues 1–26 (MSANLQNENPEVKELNQLPSRVEEEE).

This sequence belongs to the MIP18 family.

Its function is as follows. May play a role in chromosome segregation through establishment of sister chromatid cohesion. This chain is MIP18 family protein C144.16, found in Schizosaccharomyces pombe (strain 972 / ATCC 24843) (Fission yeast).